Consider the following 477-residue polypeptide: Cysteine--tRNA ligase (477 aa).

Residue cysteine 42 coordinates Zn(2+). The short motif at 44–54 (ATVQGLPHIGH) is the 'HIGH' region element. The Zn(2+) site is built by cysteine 220, histidine 245, and glutamate 249. The 'KMSKS' region signature appears at 276–280 (KMSKS). Lysine 279 lines the ATP pocket.

Belongs to the class-I aminoacyl-tRNA synthetase family. Monomer. Zn(2+) serves as cofactor.

Its subcellular location is the cytoplasm. The enzyme catalyses tRNA(Cys) + L-cysteine + ATP = L-cysteinyl-tRNA(Cys) + AMP + diphosphate. This chain is Cysteine--tRNA ligase, found in Mycolicibacterium smegmatis (strain ATCC 700084 / mc(2)155) (Mycobacterium smegmatis).